The sequence spans 290 residues: Ribosomal RNA small subunit methyltransferase A (290 aa).

Residues N27, L29, G54, E75, D100, and N125 each contribute to the S-adenosyl-L-methionine site.

It belongs to the class I-like SAM-binding methyltransferase superfamily. rRNA adenine N(6)-methyltransferase family. RsmA subfamily.

The protein resides in the cytoplasm. The catalysed reaction is adenosine(1518)/adenosine(1519) in 16S rRNA + 4 S-adenosyl-L-methionine = N(6)-dimethyladenosine(1518)/N(6)-dimethyladenosine(1519) in 16S rRNA + 4 S-adenosyl-L-homocysteine + 4 H(+). In terms of biological role, specifically dimethylates two adjacent adenosines (A1518 and A1519) in the loop of a conserved hairpin near the 3'-end of 16S rRNA in the 30S particle. May play a critical role in biogenesis of 30S subunits. The sequence is that of Ribosomal RNA small subunit methyltransferase A from Streptococcus pyogenes serotype M18 (strain MGAS8232).